Consider the following 523-residue polypeptide: MAEPKTKYDRQLRIWGELGQSALETASICLLNCGPTGSEALKNLVIGGIGSITIVDGSKVEIGDLGNNFMVDAKSVGQSRAKTVCGFLQELNDSVKANFVEENPDTLISTDPSFFSQFTLVIATQLVEDSMVKLDRICREANVMLVLARSYGLTGFVRISVKEHTAIETKPDHSLDDLRLNSPWPELKSYVESIDLNVEEPAAHKHIPYVVILVKVAEEWAQHHSGNLPSTREEKNEFKDLVKSKMVSADEENYKEALLAAFKVFAPTGISQEIQDINHDSCAEVGSNSSDFWVMVAALKEFISNEGGGEVPLEGSMPDMISSTEHYINLQKIYHSKAEADFLSMEQRVKSILVKVGQDPSSISKPTIKSFCKNARKLKVCRYRTIEDEFKSPSTTELHKYLADENYSGAIGFYILLRAVDRFAGTYKKFPGQFDGSTDEDASQLKTIALSLLSEMGCDGYELQEELYNEMCRFGAAEIHVVAALIGGITSQEVIKLITKQFVPKRGTFIFNGIDHKSQSLTL.

Belongs to the ubiquitin-activating E1 family. ULA1 subfamily. As to quaternary structure, heterodimer of ECR1 and AXL1. The complex binds to RUB1/NEDD8 and RCE1.

It is found in the nucleus. It functions in the pathway protein modification; protein neddylation. Its function is as follows. Regulatory subunit of the dimeric ECR1-AXL1 E1 enzyme. E1 activates RUB1/NEDD8 by first adenylating its C-terminal glycine residue with ATP, thereafter linking this residue to the side chain of the catalytic cysteine, yielding a RUB1-ECR1 thioester and free AMP. E1 finally transfers RUB1 to the catalytic cysteine of RCE1. May function redundantly with AXR1 in the RUB conjugating pathway. Seems not to be functionally equivalent to AXR1 in vivo. In Arabidopsis thaliana (Mouse-ear cress), this protein is NEDD8-activating enzyme E1 regulatory subunit AXL.